A 151-amino-acid polypeptide reads, in one-letter code: Gametocyte-specific factor 1-like (151 aa).

2 consecutive CHHC U11-48K-type zinc fingers follow at residues 6–33 and 40–67; these read IEICPYNPHHRIPLSRFQYHLASCRKKN and MASCKYNACHVVPIRKLAEHEATCVNRS. Zn(2+) contacts are provided by C9, H15, H25, C29, C43, H49, H59, and C63. Residues 130–151 form a disordered region; sequence QESRGGDQCPEDPQTRTRKANF.

Belongs to the UPF0224 (FAM112) family.

This Mus musculus (Mouse) protein is Gametocyte-specific factor 1-like (Gtsf1l).